The following is a 382-amino-acid chain: Dual-specificity RNA methyltransferase RlmN (382 aa).

Glu96 functions as the Proton acceptor in the catalytic mechanism. The region spanning 102–342 is the Radical SAM core domain; it reads QGKRGTLCVS…VRTTRGEDID (241 aa). Cys109 and Cys345 form a disulfide bridge. Cys116, Cys120, and Cys123 together coordinate [4Fe-4S] cluster. S-adenosyl-L-methionine-binding positions include 170–171, Ser202, 224–226, and Asn302; these read GE and SLH. Cys345 serves as the catalytic S-methylcysteine intermediate.

Belongs to the radical SAM superfamily. RlmN family. It depends on [4Fe-4S] cluster as a cofactor.

The protein localises to the cytoplasm. The catalysed reaction is adenosine(2503) in 23S rRNA + 2 reduced [2Fe-2S]-[ferredoxin] + 2 S-adenosyl-L-methionine = 2-methyladenosine(2503) in 23S rRNA + 5'-deoxyadenosine + L-methionine + 2 oxidized [2Fe-2S]-[ferredoxin] + S-adenosyl-L-homocysteine. It catalyses the reaction adenosine(37) in tRNA + 2 reduced [2Fe-2S]-[ferredoxin] + 2 S-adenosyl-L-methionine = 2-methyladenosine(37) in tRNA + 5'-deoxyadenosine + L-methionine + 2 oxidized [2Fe-2S]-[ferredoxin] + S-adenosyl-L-homocysteine. Its function is as follows. Specifically methylates position 2 of adenine 2503 in 23S rRNA and position 2 of adenine 37 in tRNAs. m2A2503 modification seems to play a crucial role in the proofreading step occurring at the peptidyl transferase center and thus would serve to optimize ribosomal fidelity. In Pseudomonas syringae pv. syringae (strain B728a), this protein is Dual-specificity RNA methyltransferase RlmN.